We begin with the raw amino-acid sequence, 585 residues long: ATP-dependent lipid A-core flippase (585 aa).

Helical transmembrane passes span 18–38 (LWPT…ALVL), 68–88 (LMAV…FISS), 142–162 (SNAL…LAVM), 163–183 (IATS…IAVL), 255–275 (PIVQ…ATIP), and 277–297 (IMSQ…MLAM). The 284-residue stretch at 30–313 (IAAAAALVLN…LTNVNSQFQR (284 aa)) folds into the ABC transmembrane type-1 domain. The ABC transporter domain maps to 345–581 (VSFKDVSFTY…NGAYKQLHKM (237 aa)). 379-386 (GRSGSGKS) serves as a coordination point for ATP.

This sequence belongs to the ABC transporter superfamily. Lipid exporter (TC 3.A.1.106) family. In terms of assembly, homodimer.

It localises to the cell inner membrane. The enzyme catalyses ATP + H2O + lipid A-core oligosaccharideSide 1 = ADP + phosphate + lipid A-core oligosaccharideSide 2.. Its function is as follows. Involved in lipopolysaccharide (LPS) biosynthesis. Translocates lipid A-core from the inner to the outer leaflet of the inner membrane. Transmembrane domains (TMD) form a pore in the inner membrane and the ATP-binding domain (NBD) is responsible for energy generation. In Mannheimia succiniciproducens (strain KCTC 0769BP / MBEL55E), this protein is ATP-dependent lipid A-core flippase.